The following is a 244-amino-acid chain: Globin-like protein 9 (244 aa).

Positions 1–38 (MRRMAKYDRSYSMQDAHGPNGLARRGTQRGCSRSKSTR) are disordered. Residues 47 to 200 (SLTFSQKQAL…LIDELRGGFE (154 aa)) form the Globin domain. Positions 111 and 143 each coordinate heme.

It belongs to the globin family.

This chain is Globin-like protein 9, found in Caenorhabditis briggsae.